Here is a 305-residue protein sequence, read N- to C-terminus: UDP-N-acetylenolpyruvoylglucosamine reductase 2 (305 aa).

The 165-residue stretch at 33-197 (VGGKADVFVA…LEARFELEEG (165 aa)) folds into the FAD-binding PCMH-type domain. R176 is a catalytic residue. S226 serves as the catalytic Proton donor. The active site involves E296.

It belongs to the MurB family. It depends on FAD as a cofactor.

It is found in the cytoplasm. It catalyses the reaction UDP-N-acetyl-alpha-D-muramate + NADP(+) = UDP-N-acetyl-3-O-(1-carboxyvinyl)-alpha-D-glucosamine + NADPH + H(+). It functions in the pathway cell wall biogenesis; peptidoglycan biosynthesis. Its function is as follows. Cell wall formation. The protein is UDP-N-acetylenolpyruvoylglucosamine reductase 2 of Bacillus thuringiensis subsp. konkukian (strain 97-27).